The following is a 294-amino-acid chain: Undecaprenyl-diphosphatase (294 aa).

6 helical membrane-spanning segments follow: residues 39 to 59 (PGAA…ILYF), 93 to 113 (TQMG…GLLF), 123 to 143 (NLWI…VVDA), 197 to 217 (VSFL…AVSA), 234 to 254 (ATIA…IGFL), and 265 to 285 (FAIY…CGVL).

The protein belongs to the UppP family.

The protein resides in the cell membrane. It catalyses the reaction di-trans,octa-cis-undecaprenyl diphosphate + H2O = di-trans,octa-cis-undecaprenyl phosphate + phosphate + H(+). In terms of biological role, catalyzes the dephosphorylation of undecaprenyl diphosphate (UPP). Confers resistance to bacitracin. The protein is Undecaprenyl-diphosphatase of Bifidobacterium adolescentis (strain ATCC 15703 / DSM 20083 / NCTC 11814 / E194a).